The following is a 1390-amino-acid chain: DNA-directed RNA polymerase subunit beta (1390 aa).

It belongs to the RNA polymerase beta chain family. In terms of assembly, the RNAP catalytic core consists of 2 alpha, 1 beta, 1 beta' and 1 omega subunit. When a sigma factor is associated with the core the holoenzyme is formed, which can initiate transcription.

It carries out the reaction RNA(n) + a ribonucleoside 5'-triphosphate = RNA(n+1) + diphosphate. Its function is as follows. DNA-dependent RNA polymerase catalyzes the transcription of DNA into RNA using the four ribonucleoside triphosphates as substrates. The chain is DNA-directed RNA polymerase subunit beta from Chromobacterium violaceum (strain ATCC 12472 / DSM 30191 / JCM 1249 / CCUG 213 / NBRC 12614 / NCIMB 9131 / NCTC 9757 / MK).